A 247-amino-acid polypeptide reads, in one-letter code: Carboxy-S-adenosyl-L-methionine synthase (247 aa).

Residues Tyr-39, 64–66 (GCS), 89–90 (DN), 117–118 (DI), Asn-132, and Arg-199 each bind S-adenosyl-L-methionine.

It belongs to the class I-like SAM-binding methyltransferase superfamily. Cx-SAM synthase family. In terms of assembly, homodimer.

The catalysed reaction is prephenate + S-adenosyl-L-methionine = carboxy-S-adenosyl-L-methionine + 3-phenylpyruvate + H2O. Functionally, catalyzes the conversion of S-adenosyl-L-methionine (SAM) to carboxy-S-adenosyl-L-methionine (Cx-SAM). This is Carboxy-S-adenosyl-L-methionine synthase from Escherichia coli O7:K1 (strain IAI39 / ExPEC).